The chain runs to 144 residues: Large ribosomal subunit protein uL16 (144 aa).

Belongs to the universal ribosomal protein uL16 family. As to quaternary structure, part of the 50S ribosomal subunit.

Binds 23S rRNA and is also seen to make contacts with the A and possibly P site tRNAs. The chain is Large ribosomal subunit protein uL16 from Clostridium botulinum (strain Alaska E43 / Type E3).